The chain runs to 896 residues: Histone-lysine N-methyltransferase CLF (896 aa).

2 disordered regions span residues 344–419 (DNLK…NRRI) and 459–514 (SGIK…DGCD). The span at 358 to 390 (GSSGQKTKSQQSESSSTARVSSESSESEVQLLS) shows a compositional bias: low complexity. Composition is skewed to polar residues over residues 391–400 (NKSPQHSPGL), 465–476 (VVSSQCNSPSTR), and 485–498 (QMENNSSFVDAQSD). Residues 504 to 514 (NNEHSATDGCD) are compositionally biased toward basic and acidic residues. In terms of domain architecture, CXC spans 633–732 (RKRITERKDQ…TLGVPNQRGD (100 aa)). One can recognise an SET domain in the interval 747 to 862 (QRVLLGRSDV…AGEELFYDYR (116 aa)). Residue Tyr861 coordinates S-adenosyl-L-methionine. Residues 869 to 884 (PAWARKPEGPGAKDDA) are compositionally biased toward basic and acidic residues. Residues 869 to 896 (PAWARKPEGPGAKDDAQPSTGRAKKLAH) are disordered.

It belongs to the class V-like SAM-binding methyltransferase superfamily. Histone-lysine methyltransferase family. EZ subfamily. Interacts with FIE1. Component of the polycomb repressive complex 2 (PRC2), composed of the core PRC2 components FIE2, EMF2B and EZ1. PRC2 methylates 'Lys-27' residues of histone H3 (H3K27me3), leading to transcriptional repression of the affected target gene. In terms of tissue distribution, widely expressed. Highly expressed in young panicle.

It catalyses the reaction L-lysyl(27)-[histone H3] + 3 S-adenosyl-L-methionine = N(6),N(6),N(6)-trimethyl-L-lysyl(27)-[histone H3] + 3 S-adenosyl-L-homocysteine + 3 H(+). Polycomb group (PcG) protein. Catalytic subunit of some PcG multiprotein complex, which methylates 'Lys-27' of histone H3, leading to transcriptional repression of the affected target genes. PcG proteins act by forming multiprotein complexes, which are required to maintain the transcriptionally repressive state of homeotic genes throughout development. PcG proteins are not required to initiate repression, but to maintain it during later stages of development. Involved in the regulation of flowering. Represses flowering under long day (LD) conditions. Regulates the trimethylation on histone H3 'Lys-27' (H3K27me3) of the flowering regulators MADS14, MADS15, RFT1, EHD1, HD3A and LF. This chain is Histone-lysine N-methyltransferase CLF, found in Oryza sativa subsp. japonica (Rice).